A 1824-amino-acid chain; its full sequence is Afadin (1824 aa).

In terms of domain architecture, Ras-associating 1 spans 39–133; that stretch reads FHGVMRFYFQ…GRFVLKNEND (95 aa). A disordered region spans residues 128–194; sequence LKNENDAIPP…DRPFQGEDVE (67 aa). Residues 146–185 are a coiled coil; that stretch reads EKQEKEGVIQNFKRTLSKKEKKEKKKREKEALRQASDKDD. A compositionally biased stretch (basic residues) spans 160-172; sequence TLSKKEKKEKKKR. A compositionally biased stretch (basic and acidic residues) spans 173–189; the sequence is EKEALRQASDKDDRPFQ. A phosphoserine mark is found at serine 216, serine 246, and serine 256. A Ras-associating 2 domain is found at 246-348; sequence SGGTLRIYAD…LVFQLKRRPP (103 aa). Residues 349-371 show a composition bias toward basic and acidic residues; sequence DHIPKKTKKHLEGKTPKGKERAD. Residues 349–378 form a disordered region; that stretch reads DHIPKKTKKHLEGKTPKGKERADGSGYGST. Residues serine 391 and serine 424 each carry the phosphoserine modification. The FHA domain occupies 426-492; sequence TEVGTEKLDD…LQSGMKVQFG (67 aa). Serine 512, serine 557, serine 562, serine 589, and serine 655 each carry phosphoserine. The segment at 534–595 is disordered; it reads FDLGGDIHSG…RQESRTQDAS (62 aa). Basic and acidic residues predominate over residues 580-591; sequence QQPDYRRQESRT. A Dilute domain is found at 668-908; that stretch reads NKMVSMMEGV…IENVVTVAEN (241 aa). Residues 1007–1093 form the PDZ domain; it reads IITVTLKKQN…VVTLEVAKQG (87 aa). 9 positions are modified to phosphoserine: serine 1083, serine 1107, serine 1126, serine 1140, serine 1143, serine 1172, serine 1173, serine 1182, and serine 1199. The disordered stretch occupies residues 1107–1223; the sequence is SPMMQRISDR…PRPEAYPIPT (117 aa). The segment covering 1113–1128 has biased composition (basic and acidic residues); it reads ISDRRGSGKPRPKSEG. Positions 1132–1143 are enriched in polar residues; it reads YNNSTQNGSPES. The span at 1152–1172 shows a compositional bias: basic and acidic residues; the sequence is SEPKKLPGDDRLMKNRADHRS. Residues 1190 to 1210 show a composition bias toward polar residues; the sequence is ASGTTAKITSVSTGNLCTEEQ. Residues threonine 1211 and threonine 1232 each carry the phosphothreonine modification. Disordered regions lie at residues 1235–1473, 1501–1528, and 1569–1824; these read ASKS…LQRP, SKEE…EKQQ, and RLQE…LNTK. Serine 1238 carries the post-translational modification Phosphoserine. Composition is skewed to basic and acidic residues over residues 1252 to 1262 and 1274 to 1302; these read YEEKPHMHTDS and RSQE…KSDS. Serine 1275 bears the Phosphoserine mark. Over residues 1309-1318 the composition is skewed to low complexity; it reads SSSLDSSTSS. Over residues 1325-1337 the composition is skewed to polar residues; sequence SSKSVTPASTLTK. Serine 1328 carries the post-translational modification Phosphoserine. Threonine 1330 is modified (phosphothreonine). Positions 1345 to 1356 are enriched in low complexity; the sequence is TPAAIPATPVAV. A compositionally biased stretch (pro residues) spans 1364 to 1373; sequence LPPPPPPPPV. Over residues 1407 to 1441 the composition is skewed to basic and acidic residues; the sequence is AERRKREEHQRWYEKEKARLEEERERKRREQERKL. Positions 1408–1448 form a coiled coil; sequence ERRKREEHQRWYEKEKARLEEERERKRREQERKLGQMRTQS. Serine 1501 and serine 1512 each carry phosphoserine. A compositionally biased stretch (basic and acidic residues) spans 1515 to 1528; that stretch reads PWKRDAKEKLEKQQ. A coiled-coil region spans residues 1523 to 1667; sequence KLEKQQQMHI…SRLEAERRRQ (145 aa). The segment covering 1578-1589 has biased composition (acidic residues); it reads EDDEEEEDDDVD. Basic and acidic residues predominate over residues 1597–1677; the sequence is LEAERRARLQ…HDEAARRLLE (81 aa). The span at 1694 to 1709 shows a compositional bias: pro residues; sequence PPSPSPAPGAPPPPPQ. A phosphoserine mark is found at serine 1696, serine 1721, serine 1774, serine 1779, and serine 1799. Over residues 1762-1776 the composition is skewed to basic and acidic residues; the sequence is DACRDAKEKRSKSQD. Lysine 1807 bears the N6-acetyllysine mark. Positions 1813 to 1824 are enriched in basic and acidic residues; it reads KLTELENELNTK.

As to quaternary structure, homodimer. Interacts with F-actin, nectin and NECTIN3. Essential for the association of nectin and E-cadherin. Isoform 1/s-afadin does not interact with F-actin. Interacts with ZO-1 and occludin, but probably in an indirect manner. Interacts with RIT1 and RIT2. Interacts with NRXN1 and BCR. Interacts with ADAM10; the interaction locks ADAM10 at adherens junctions following ADAM10 recruitment to adherens junctions by TSPAN33.

It is found in the cell junction. Its subcellular location is the adherens junction. In terms of biological role, belongs to an adhesion system, probably together with the E-cadherin-catenin system, which plays a role in the organization of homotypic, interneuronal and heterotypic cell-cell adherens junctions (AJs). Nectin- and actin-filament-binding protein that connects nectin to the actin cytoskeleton. May play a key role in the organization of epithelial structures of the embryonic ectoderm. Essential for the organization of adherens junctions. The polypeptide is Afadin (Homo sapiens (Human)).